We begin with the raw amino-acid sequence, 489 residues long: Rhamnulokinase (489 aa).

13–17 (ASSGR) contacts ATP. C68 and C222 form a disulfide bridge. Residues G83 and 236–238 (HDT) contribute to the substrate site. Catalysis depends on D237, which acts as the Proton acceptor. T259 contacts ATP. N296 contributes to the substrate binding site. Position 304 (Q304) interacts with ATP. C353 and C370 are oxidised to a cystine. ATP is bound at residue G402. C413 and C417 form a disulfide bridge.

The protein belongs to the rhamnulokinase family. Requires Mg(2+) as cofactor.

It catalyses the reaction L-rhamnulose + ATP = L-rhamnulose 1-phosphate + ADP + H(+). The protein operates within carbohydrate degradation; L-rhamnose degradation; glycerone phosphate from L-rhamnose: step 2/3. In terms of biological role, involved in the catabolism of L-rhamnose (6-deoxy-L-mannose). Catalyzes the transfer of the gamma-phosphate group from ATP to the 1-hydroxyl group of L-rhamnulose to yield L-rhamnulose 1-phosphate. In Salmonella enteritidis PT4 (strain P125109), this protein is Rhamnulokinase.